We begin with the raw amino-acid sequence, 306 residues long: Large ribosomal subunit protein mL45 (306 aa).

A disordered region spans residues 287 to 306; that stretch reads LKPEEEYEEAQGEAQKPQLA.

This sequence belongs to the mitochondrion-specific ribosomal protein mL45 family. In terms of assembly, component of the mitochondrial large ribosomal subunit (mt-LSU). Mature mammalian 55S mitochondrial ribosomes consist of a small (28S) and a large (39S) subunit. The 28S small subunit contains a 12S ribosomal RNA (12S mt-rRNA) and 30 different proteins. The 39S large subunit contains a 16S rRNA (16S mt-rRNA), a copy of mitochondrial valine transfer RNA (mt-tRNA(Val)), which plays an integral structural role, and 52 different proteins.

The protein resides in the mitochondrion. Functionally, component of the mitochondrial large ribosomal subunit (mt-LSU). Within the mitochondrial ribosomes, required to direct the nascent polypeptide toward the tunnel exit and position the exit at a distance from the membrane surface. This Homo sapiens (Human) protein is Large ribosomal subunit protein mL45.